We begin with the raw amino-acid sequence, 365 residues long: Peptide chain release factor 1 (365 aa).

The residue at position 236 (Gln-236) is an N5-methylglutamine.

Belongs to the prokaryotic/mitochondrial release factor family. Post-translationally, methylated by PrmC. Methylation increases the termination efficiency of RF1.

Its subcellular location is the cytoplasm. Functionally, peptide chain release factor 1 directs the termination of translation in response to the peptide chain termination codons UAG and UAA. The protein is Peptide chain release factor 1 of Latilactobacillus sakei subsp. sakei (strain 23K) (Lactobacillus sakei subsp. sakei).